The primary structure comprises 294 residues: Cell division protein FtsQ (294 aa).

Residues 1-26 are Cytoplasmic-facing; that stretch reads MARGPNRRRVDRVPGERRRRLARAMA. A helical transmembrane segment spans residues 27–49; the sequence is LALPSILALAALGGAATLGWRVG. Over 50 to 294 the chain is Periplasmic; it reads WKSDLLRVRE…GPQGRSSSLR (245 aa). The POTRA domain maps to 55–123; the sequence is LRVREIRFEG…PALEVQLAER (69 aa). Residues 266–294 are disordered; the sequence is AGRRGEPDGRSSYAAGGGGGPQGRSSSLR.

This sequence belongs to the FtsQ/DivIB family. FtsQ subfamily.

It localises to the cell inner membrane. Essential cell division protein. The sequence is that of Cell division protein FtsQ from Anaeromyxobacter sp. (strain K).